A 441-amino-acid polypeptide reads, in one-letter code: 5-hydroxytryptamine receptor 3B (441 aa).

Positions 1-21 (MLSSVMAPLWACILVAAGILA) are cleaved as a signal peptide. Residues 22–238 (TDTHHPQDSA…IQFNVVMRRH (217 aa)) lie on the Extracellular side of the membrane. 5 N-linked (GlcNAc...) asparagine glycosylation sites follow: N52, N96, N138, N168, and N203. Cysteines 155 and 169 form a disulfide. A helical membrane pass occupies residues 239–259 (PLVYVVSLLIPSIFLMLVDLG). The Cytoplasmic portion of the chain corresponds to 260-268 (SFYLPPNCR). Residues 269–286 (ARIVFKTSVLVGYTVFRV) traverse the membrane as a helical segment. A glycan (N-linked (GlcNAc...) asparagine) is linked at N287. The Extracellular segment spans residues 287-303 (NMSNQVPRSVGSTPLIG). The chain crosses the membrane as a helical span at residues 304–324 (HFFTICMAFLVLSLAKSIVLV). Residues 325-414 (KFLHDEQRGG…WLVLLSRFDR (90 aa)) are Cytoplasmic-facing. The segment at 381–413 (VWSQLQSISNYLQTQDQTDQQEAEWLVLLSRFD) is HA-stretch; determines single-channel conductance in 5-HT3 receptors. A helical transmembrane segment spans residues 415 to 435 (LLFQSYLFMLGIYTITLCSLW). The Extracellular segment spans residues 436–441 (ALWGGV).

This sequence belongs to the ligand-gated ion channel (TC 1.A.9) family. 5-hydroxytryptamine receptor (TC 1.A.9.2) subfamily. HTR3B sub-subfamily. As to quaternary structure, forms homopentameric as well as heteropentameric serotonin-activated cation-selective channel complexes with HTR3A. The homomeric complex is not functional. Heteropentameric complexes display properties which resemble that of neuronal serotonin-activated channels in vivo. In terms of processing, N-glycosylation required for membrane localization. As to expression, expressed in the brain cortex, in the caudate nucleus, the hippocampus, the thalamus and the amygdala. Detected in the kidney and testis as well as in monocytes of the spleen, small and large intestine, uterus, prostate, ovary and placenta.

It localises to the postsynaptic cell membrane. The protein resides in the cell membrane. The enzyme catalyses Na(+)(in) = Na(+)(out). It catalyses the reaction K(+)(in) = K(+)(out). It carries out the reaction Ca(2+)(in) = Ca(2+)(out). Its function is as follows. Forms serotonin (5-hydroxytryptamine/5-HT3)-activated cation-selective channel complexes, which when activated cause fast, depolarizing responses in neurons. The polypeptide is 5-hydroxytryptamine receptor 3B (Homo sapiens (Human)).